The following is a 157-amino-acid chain: uncharacterized protein (157 aa).

Lys115 participates in a covalent cross-link: Isoglutamyl lysine isopeptide (Lys-Gln) (interchain with Q-Cter in protein Pup).

This is an uncharacterized protein from Mycolicibacterium smegmatis (strain ATCC 700084 / mc(2)155) (Mycobacterium smegmatis).